Here is a 336-residue protein sequence, read N- to C-terminus: Probable G-protein coupled receptor 160 (336 aa).

Over 1–20 (MTALSSKNCSLQYQLHQSPQ) the chain is Extracellular. A glycan (N-linked (GlcNAc...) asparagine) is linked at N8. The helical transmembrane segment at 21 to 41 (LLEASCLLFLIILGKVLLNIL) threads the bilayer. At 42–56 (LLRVRRGDARWTLME) the chain is on the cytoplasmic side. The helical transmembrane segment at 57–77 (YFCFSLALVDLLLLVNISILT) threads the bilayer. Residues 78-95 (YFRDFVVLGIRFTRYHIC) are Extracellular-facing. A helical membrane pass occupies residues 96 to 116 (LLTQIISFTYGFLHYPVCSLA). Residues 117–136 (CIDYWCNLSRASKQSSRWQK) lie on the Cytoplasmic side of the membrane. A helical transmembrane segment spans residues 137 to 157 (LLYFLTVILTWISVLAYVLVD). Residues 158–186 (PAISVSLKAHRGYVYQCPAYVSTQSHWLS) lie on the Extracellular side of the membrane. A helical transmembrane segment spans residues 187–207 (LSMLMVLFVAFLISWQEVVAL). The Cytoplasmic segment spans residues 208 to 243 (LQAMRIASYKSKAALYFPFPLHCGYALSCREALLPR). A helical membrane pass occupies residues 244-264 (LIVCFLGTWFPFVALQVLILS). The Extracellular segment spans residues 265–272 (LRVQIPAY). The chain crosses the membrane as a helical span at residues 273 to 293 (IEMNVPWLYFVNSFLIAAVYW). Residues 294-336 (FNCHKLDLRDSSLPVDPFINWKCCFVPVHRLKQVERPMSIVIC) lie on the Cytoplasmic side of the membrane.

This sequence belongs to the G-protein coupled receptor 1 family.

The protein localises to the cell membrane. Functionally, orphan receptor. The polypeptide is Probable G-protein coupled receptor 160 (Gpr160) (Mus musculus (Mouse)).